We begin with the raw amino-acid sequence, 642 residues long: Threonine--tRNA ligase (642 aa).

One can recognise a TGS domain in the interval 1–63 (MSEIVVTLPD…TDDCELVIVT (63 aa)). The segment at 242-533 (DHRKLGQELD…LIEHFDGNFP (292 aa)) is catalytic. Residues Cys334, His385, and His510 each coordinate Zn(2+).

Belongs to the class-II aminoacyl-tRNA synthetase family. In terms of assembly, homodimer. Zn(2+) is required as a cofactor.

It is found in the cytoplasm. The catalysed reaction is tRNA(Thr) + L-threonine + ATP = L-threonyl-tRNA(Thr) + AMP + diphosphate + H(+). Catalyzes the attachment of threonine to tRNA(Thr) in a two-step reaction: L-threonine is first activated by ATP to form Thr-AMP and then transferred to the acceptor end of tRNA(Thr). This Natronomonas pharaonis (strain ATCC 35678 / DSM 2160 / CIP 103997 / JCM 8858 / NBRC 14720 / NCIMB 2260 / Gabara) (Halobacterium pharaonis) protein is Threonine--tRNA ligase.